The chain runs to 496 residues: Lysine--tRNA ligase (496 aa).

The Mg(2+) site is built by E403 and E410.

Belongs to the class-II aminoacyl-tRNA synthetase family. As to quaternary structure, homodimer. The cofactor is Mg(2+).

It localises to the cytoplasm. The enzyme catalyses tRNA(Lys) + L-lysine + ATP = L-lysyl-tRNA(Lys) + AMP + diphosphate. This is Lysine--tRNA ligase from Aster yellows witches'-broom phytoplasma (strain AYWB).